The following is a 346-amino-acid chain: Holliday junction branch migration complex subunit RuvB (346 aa).

A large ATPase domain (RuvB-L) region spans residues 1–182 (MSEAARLIAP…FGIPVRLNFY (182 aa)). ATP-binding positions include Leu21, Arg22, Gly63, Lys66, Thr67, Thr68, 129-131 (EDF), Arg172, Tyr182, and Arg219. Residue Thr67 participates in Mg(2+) binding. Residues 183–253 (TVEELELIVR…IADEALTRLL (71 aa)) are small ATPAse domain (RuvB-S). Positions 256–346 (SMGLDQLDRR…SQFRLTLEDD (91 aa)) are head domain (RuvB-H). 3 residues coordinate DNA: Arg292, Arg311, and Arg316.

This sequence belongs to the RuvB family. In terms of assembly, homohexamer. Forms an RuvA(8)-RuvB(12)-Holliday junction (HJ) complex. HJ DNA is sandwiched between 2 RuvA tetramers; dsDNA enters through RuvA and exits via RuvB. An RuvB hexamer assembles on each DNA strand where it exits the tetramer. Each RuvB hexamer is contacted by two RuvA subunits (via domain III) on 2 adjacent RuvB subunits; this complex drives branch migration. In the full resolvosome a probable DNA-RuvA(4)-RuvB(12)-RuvC(2) complex forms which resolves the HJ.

It localises to the cytoplasm. It carries out the reaction ATP + H2O = ADP + phosphate + H(+). Functionally, the RuvA-RuvB-RuvC complex processes Holliday junction (HJ) DNA during genetic recombination and DNA repair, while the RuvA-RuvB complex plays an important role in the rescue of blocked DNA replication forks via replication fork reversal (RFR). RuvA specifically binds to HJ cruciform DNA, conferring on it an open structure. The RuvB hexamer acts as an ATP-dependent pump, pulling dsDNA into and through the RuvAB complex. RuvB forms 2 homohexamers on either side of HJ DNA bound by 1 or 2 RuvA tetramers; 4 subunits per hexamer contact DNA at a time. Coordinated motions by a converter formed by DNA-disengaged RuvB subunits stimulates ATP hydrolysis and nucleotide exchange. Immobilization of the converter enables RuvB to convert the ATP-contained energy into a lever motion, pulling 2 nucleotides of DNA out of the RuvA tetramer per ATP hydrolyzed, thus driving DNA branch migration. The RuvB motors rotate together with the DNA substrate, which together with the progressing nucleotide cycle form the mechanistic basis for DNA recombination by continuous HJ branch migration. Branch migration allows RuvC to scan DNA until it finds its consensus sequence, where it cleaves and resolves cruciform DNA. The polypeptide is Holliday junction branch migration complex subunit RuvB (Sinorhizobium medicae (strain WSM419) (Ensifer medicae)).